The following is a 386-amino-acid chain: Queuine tRNA-ribosyltransferase (386 aa).

Residue aspartate 102 is the Proton acceptor of the active site. Substrate-binding positions include 102–106 (DSGGY), aspartate 156, glutamine 203, and glycine 230. An RNA binding region spans residues 261–267 (GVGKPDD). The Nucleophile role is filled by aspartate 280. The segment at 285–289 (TRSGR) is RNA binding; important for wobble base 34 recognition. Zn(2+) contacts are provided by cysteine 318, cysteine 320, cysteine 323, and histidine 349.

It belongs to the queuine tRNA-ribosyltransferase family. Homodimer. Within each dimer, one monomer is responsible for RNA recognition and catalysis, while the other monomer binds to the replacement base PreQ1. It depends on Zn(2+) as a cofactor.

It carries out the reaction 7-aminomethyl-7-carbaguanine + guanosine(34) in tRNA = 7-aminomethyl-7-carbaguanosine(34) in tRNA + guanine. The protein operates within tRNA modification; tRNA-queuosine biosynthesis. In terms of biological role, catalyzes the base-exchange of a guanine (G) residue with the queuine precursor 7-aminomethyl-7-deazaguanine (PreQ1) at position 34 (anticodon wobble position) in tRNAs with GU(N) anticodons (tRNA-Asp, -Asn, -His and -Tyr). Catalysis occurs through a double-displacement mechanism. The nucleophile active site attacks the C1' of nucleotide 34 to detach the guanine base from the RNA, forming a covalent enzyme-RNA intermediate. The proton acceptor active site deprotonates the incoming PreQ1, allowing a nucleophilic attack on the C1' of the ribose to form the product. After dissociation, two additional enzymatic reactions on the tRNA convert PreQ1 to queuine (Q), resulting in the hypermodified nucleoside queuosine (7-(((4,5-cis-dihydroxy-2-cyclopenten-1-yl)amino)methyl)-7-deazaguanosine). This Zymomonas mobilis subsp. mobilis (strain ATCC 31821 / ZM4 / CP4) protein is Queuine tRNA-ribosyltransferase.